The primary structure comprises 477 residues: uncharacterized protein (477 aa).

The helical transmembrane segment at 107-129 threads the bilayer; it reads VNFWSLSMACASVLALLGLVYLI.

Its subcellular location is the membrane. This is an uncharacterized protein from Treponema pallidum (strain Nichols).